Consider the following 382-residue polypeptide: Ubiquitin-like protease 4 (382 aa).

The tract at residues 46 to 106 (GTHLDGSIGE…DNDEWTNQKR (61 aa)) is disordered. A compositionally biased stretch (acidic residues) spans 84 to 100 (DLVDEDEEEEDEEDNDE).

The protein belongs to the peptidase C48 family. In terms of tissue distribution, expressed in hermaphrodite-specific neurons, head muscles, body wall muscles and pharyngeal cells.

It is found in the cytoplasm. Its subcellular location is the cytoskeleton. The protein resides in the microtubule organizing center. The protein localises to the centrosome. It localises to the nucleus. It is found in the mitochondrion matrix. Its pathway is protein modification; protein sumoylation. Functionally, protease required for deconjugation of smo-1 conjugates from target proteins which is necessary for cell cycle progression. Required for respiration and the maintenance of normal mitochondrial homeostasis. In response to mitochondrial stress, required for the removal of smo-1 conjugates from the transcription factor dve-1, which promotes the translocation of dve-1 from the cytosol to the nucleus to initiate the mitochondrial unfolded protein response. Furthermore, removes the smo-1 conjugates from the transcription factor atfs-1 to promote its stability and activate the mitochondrial unfolded protein response. Also plays a role in promoting mitochondrial unfolded protein response-mediated innate immunity following infection with P.aeruginosa. The protein is Ubiquitin-like protease 4 of Caenorhabditis elegans.